The following is a 288-amino-acid chain: Orotidine 5'-phosphate decarboxylase (288 aa).

The active-site Proton donor is lysine 99.

Belongs to the OMP decarboxylase family. Type 2 subfamily.

It catalyses the reaction orotidine 5'-phosphate + H(+) = UMP + CO2. The protein operates within pyrimidine metabolism; UMP biosynthesis via de novo pathway; UMP from orotate: step 2/2. This is Orotidine 5'-phosphate decarboxylase (pyrF) from Myxococcus xanthus (strain DK1622).